We begin with the raw amino-acid sequence, 298 residues long: Probable oxidoreductase (298 aa).

9-33 (VVTGGASGLGAETVRALAAAGAEVT) provides a ligand contact to NAD(+). Serine 139 is a substrate binding site. The active-site Proton acceptor is tyrosine 165.

Belongs to the short-chain dehydrogenases/reductases (SDR) family.

This is Probable oxidoreductase from Streptomyces antibioticus.